Reading from the N-terminus, the 374-residue chain is Lipoyl synthase, mitochondrial (374 aa).

7 residues coordinate [4Fe-4S] cluster: cysteine 101, cysteine 106, cysteine 112, cysteine 132, cysteine 136, cysteine 139, and serine 347. Residues 117-336 (ENGTQTATIM…EERGNDLGFL (220 aa)) form the Radical SAM core domain.

The protein belongs to the radical SAM superfamily. Lipoyl synthase family. The cofactor is [4Fe-4S] cluster.

Its subcellular location is the mitochondrion. It carries out the reaction [[Fe-S] cluster scaffold protein carrying a second [4Fe-4S](2+) cluster] + N(6)-octanoyl-L-lysyl-[protein] + 2 oxidized [2Fe-2S]-[ferredoxin] + 2 S-adenosyl-L-methionine + 4 H(+) = [[Fe-S] cluster scaffold protein] + N(6)-[(R)-dihydrolipoyl]-L-lysyl-[protein] + 4 Fe(3+) + 2 hydrogen sulfide + 2 5'-deoxyadenosine + 2 L-methionine + 2 reduced [2Fe-2S]-[ferredoxin]. Its pathway is protein modification; protein lipoylation via endogenous pathway; protein N(6)-(lipoyl)lysine from octanoyl-[acyl-carrier-protein]: step 2/2. Functionally, catalyzes the radical-mediated insertion of two sulfur atoms into the C-6 and C-8 positions of the octanoyl moiety bound to the lipoyl domains of lipoate-dependent enzymes, thereby converting the octanoylated domains into lipoylated derivatives. In Drosophila pseudoobscura pseudoobscura (Fruit fly), this protein is Lipoyl synthase, mitochondrial.